A 419-amino-acid chain; its full sequence is MLGIITFIIIFGILVIVHEFGHFYFAKKSGILVREFAIGMGPKIFSHVDQGGTLYTLRMLPLGGYVRMAGWGDDKTEIKTGTPASLTLNEQGFVKRINLSQSKLDPTSLPMHVTGYDLEDQLSITGLVLEETKTYKVAHDATIVEEDGTEIRIAPLDVQYQNASIGGRLITNFAGPMNNFILGIVVFILLVFLQGGMPDFSSNHVRVQENGAAAKAGLRDNDQIVAINGYKVTSWNDLTEAVDLATRDLGPSQTIKVTYKSHQRLKTVAVKPQKHAKTYTIGVKASLKTGFKDKLLGGLELAWSGAFTILNALKGLITGFSLNKLGGPVAMYDMSNQAAQNGLESVLSLMAMLSINLGIFNLIPIPALDGGKILMNIIEAIRRKPIKQETEAYITLAGVAIMVVLMIAVTWNDIMRVFF.

A Zn(2+)-binding site is contributed by His18. Glu19 is a catalytic residue. His22 provides a ligand contact to Zn(2+). The next 4 helical transmembrane spans lie at 169–191, 301–323, 343–365, and 392–411; these read LITN…ILLV, LAWS…FSLN, LESV…LIPI, and AYIT…AVTW. Residues 175 to 274 form the PDZ domain; sequence GPMNNFILGI…LKTVAVKPQK (100 aa).

This sequence belongs to the peptidase M50B family. Requires Zn(2+) as cofactor.

It is found in the cell membrane. The chain is Putative zinc metalloprotease spyM18_2031 from Streptococcus pyogenes serotype M18 (strain MGAS8232).